The following is a 332-amino-acid chain: Holliday junction branch migration complex subunit RuvB (332 aa).

The segment at 1 to 181 (MTRFLDSDAM…FGITGHMEYY (181 aa)) is large ATPase domain (RuvB-L). Residues L20, R21, G62, K65, T66, T67, 128–130 (EDF), R171, Y181, and R218 contribute to the ATP site. T66 serves as a coordination point for Mg(2+). The tract at residues 182 to 252 (EENDLTEIIE…ITDKALTMLD (71 aa)) is small ATPAse domain (RuvB-S). Positions 255-332 (HEGLDYVDQK…EHLGYQRFDK (78 aa)) are head domain (RuvB-H). Residues R291, R310, R312, and R315 each coordinate DNA.

The protein belongs to the RuvB family. Homohexamer. Forms an RuvA(8)-RuvB(12)-Holliday junction (HJ) complex. HJ DNA is sandwiched between 2 RuvA tetramers; dsDNA enters through RuvA and exits via RuvB. An RuvB hexamer assembles on each DNA strand where it exits the tetramer. Each RuvB hexamer is contacted by two RuvA subunits (via domain III) on 2 adjacent RuvB subunits; this complex drives branch migration. In the full resolvosome a probable DNA-RuvA(4)-RuvB(12)-RuvC(2) complex forms which resolves the HJ.

The protein resides in the cytoplasm. It carries out the reaction ATP + H2O = ADP + phosphate + H(+). In terms of biological role, the RuvA-RuvB-RuvC complex processes Holliday junction (HJ) DNA during genetic recombination and DNA repair, while the RuvA-RuvB complex plays an important role in the rescue of blocked DNA replication forks via replication fork reversal (RFR). RuvA specifically binds to HJ cruciform DNA, conferring on it an open structure. The RuvB hexamer acts as an ATP-dependent pump, pulling dsDNA into and through the RuvAB complex. RuvB forms 2 homohexamers on either side of HJ DNA bound by 1 or 2 RuvA tetramers; 4 subunits per hexamer contact DNA at a time. Coordinated motions by a converter formed by DNA-disengaged RuvB subunits stimulates ATP hydrolysis and nucleotide exchange. Immobilization of the converter enables RuvB to convert the ATP-contained energy into a lever motion, pulling 2 nucleotides of DNA out of the RuvA tetramer per ATP hydrolyzed, thus driving DNA branch migration. The RuvB motors rotate together with the DNA substrate, which together with the progressing nucleotide cycle form the mechanistic basis for DNA recombination by continuous HJ branch migration. Branch migration allows RuvC to scan DNA until it finds its consensus sequence, where it cleaves and resolves cruciform DNA. In Streptococcus agalactiae serotype Ia (strain ATCC 27591 / A909 / CDC SS700), this protein is Holliday junction branch migration complex subunit RuvB.